Reading from the N-terminus, the 323-residue chain is uncharacterized protein (323 aa).

The helical transmembrane segment at 4 to 24 threads the bilayer; that stretch reads IIFAFIILFVFLLPMIIFYQP.

The protein localises to the membrane. This is an uncharacterized protein from Escherichia coli (strain K12).